Reading from the N-terminus, the 485-residue chain is Argininosuccinate lyase (485 aa).

This sequence belongs to the lyase 1 family. Argininosuccinate lyase subfamily.

It localises to the cytoplasm. It catalyses the reaction 2-(N(omega)-L-arginino)succinate = fumarate + L-arginine. It functions in the pathway amino-acid biosynthesis; L-arginine biosynthesis; L-arginine from L-ornithine and carbamoyl phosphate: step 3/3. This Halobacterium salinarum (strain ATCC 29341 / DSM 671 / R1) protein is Argininosuccinate lyase.